The sequence spans 250 residues: 3-deoxy-manno-octulosonate cytidylyltransferase (250 aa).

The protein belongs to the KdsB family.

It is found in the cytoplasm. It catalyses the reaction 3-deoxy-alpha-D-manno-oct-2-ulosonate + CTP = CMP-3-deoxy-beta-D-manno-octulosonate + diphosphate. It functions in the pathway nucleotide-sugar biosynthesis; CMP-3-deoxy-D-manno-octulosonate biosynthesis; CMP-3-deoxy-D-manno-octulosonate from 3-deoxy-D-manno-octulosonate and CTP: step 1/1. The protein operates within bacterial outer membrane biogenesis; lipopolysaccharide biosynthesis. Functionally, activates KDO (a required 8-carbon sugar) for incorporation into bacterial lipopolysaccharide in Gram-negative bacteria. The protein is 3-deoxy-manno-octulosonate cytidylyltransferase of Actinobacillus pleuropneumoniae serotype 7 (strain AP76).